The primary structure comprises 108 residues: MKVLVITALCFILLQNVLGEDTYEDLQNYIENLINENQDEARECVPLENDCTKLKYSNPCCKDEKKKYQYKCSCIVDKTEQCTCQRKETVEKMMKGMKYIKNLGKKIG.

The signal sequence occupies residues 1-19 (MKVLVITALCFILLQNVLG). A propeptide spans 20–42 (EDTYEDLQNYIENLINENQDEAR) (removed in mature form). Positions 39 to 42 (DEAR) match the Processing quadruplet motif motif. 4 disulfides stabilise this stretch: Cys44–Cys61, Cys51–Cys72, Cys60–Cys84, and Cys74–Cys82. An Isoleucine amide modification is found at Ile107.

Belongs to the neurotoxin 19 (CSTX) family. 11 (latartoxin) subfamily. Post-translationally, contains 4 disulfide bonds. In terms of processing, cleavage of the propeptide depends on the processing quadruplet motif (XXXR, with at least one of X being E). As to expression, expressed by the venom gland.

It is found in the secreted. Its function is as follows. Insect toxin. The protein is Latartoxin-2c of Lachesana tarabaevi (Spider).